An 87-amino-acid polypeptide reads, in one-letter code: Retinal rod rhodopsin-sensitive cGMP 3',5'-cyclic phosphodiesterase subunit gamma (87 aa).

N-acetylmethionine is present on M1. A disordered region spans residues 16–54; it reads VVGGPVTPRKGPPKFKQRQTRQFKSKPPKKGVQGFGDDI. The span at 26–44 shows a compositional bias: basic residues; it reads GPPKFKQRQTRQFKSKPPK.

The protein belongs to the rod/cone cGMP-PDE gamma subunit family. As to quaternary structure, oligomer composed of two catalytic chains (alpha and beta), an inhibitory chain (gamma) and the delta chain.

The enzyme catalyses 3',5'-cyclic GMP + H2O = GMP + H(+). In terms of biological role, participates in processes of transmission and amplification of the visual signal. cGMP-PDEs are the effector molecules in G-protein-mediated phototransduction in vertebrate rods and cones. In Cavia porcellus (Guinea pig), this protein is Retinal rod rhodopsin-sensitive cGMP 3',5'-cyclic phosphodiesterase subunit gamma (PDE6G).